A 286-amino-acid chain; its full sequence is CDP-diacylglycerol--serine O-phosphatidyltransferase (286 aa).

Transmembrane regions (helical) follow at residues 15-35, 95-115, 135-155, 167-187, and 207-227; these read ILPSAMTVLSICAGLTAIKFA, MLSKWPVGWVVVLLYAVCVVL, EFFVGMPAPAGAVSMIGLLAL, VWFLSFWVTGTSILLVSGIPM, and LAICAAAAVLAPYLLIWVIII.

Belongs to the CDP-alcohol phosphatidyltransferase class-I family.

It is found in the cell membrane. It carries out the reaction a CDP-1,2-diacyl-sn-glycerol + L-serine = a 1,2-diacyl-sn-glycero-3-phospho-L-serine + CMP + H(+). This Mycobacterium bovis (strain ATCC BAA-935 / AF2122/97) protein is CDP-diacylglycerol--serine O-phosphatidyltransferase (pssA).